Consider the following 383-residue polypeptide: tRNA-specific 2-thiouridylase MnmA (383 aa).

Residues 10–17 (AMSGGVDS) and M36 contribute to the ATP site. C107 functions as the Nucleophile in the catalytic mechanism. A disulfide bond links C107 and C206. G131 contributes to the ATP binding site. Residues 155–157 (KDQ) form an interaction with tRNA region. The active-site Cysteine persulfide intermediate is C206. An interaction with tRNA region spans residues 315-316 (RY).

This sequence belongs to the MnmA/TRMU family.

It is found in the cytoplasm. The enzyme catalyses S-sulfanyl-L-cysteinyl-[protein] + uridine(34) in tRNA + AH2 + ATP = 2-thiouridine(34) in tRNA + L-cysteinyl-[protein] + A + AMP + diphosphate + H(+). Its function is as follows. Catalyzes the 2-thiolation of uridine at the wobble position (U34) of tRNA, leading to the formation of s(2)U34. The polypeptide is tRNA-specific 2-thiouridylase MnmA (Salinibacter ruber (strain DSM 13855 / M31)).